We begin with the raw amino-acid sequence, 301 residues long: Ribosomal protein L11 methyltransferase (301 aa).

Positions 147, 168, 190, and 237 each coordinate S-adenosyl-L-methionine.

This sequence belongs to the methyltransferase superfamily. PrmA family.

The protein localises to the cytoplasm. The enzyme catalyses L-lysyl-[protein] + 3 S-adenosyl-L-methionine = N(6),N(6),N(6)-trimethyl-L-lysyl-[protein] + 3 S-adenosyl-L-homocysteine + 3 H(+). Methylates ribosomal protein L11. The protein is Ribosomal protein L11 methyltransferase of Synechococcus sp. (strain RCC307).